The primary structure comprises 284 residues: ADP-polyphosphate phosphotransferase 3 (284 aa).

2 stretches are compositionally biased toward basic and acidic residues: residues 1–22 (MDKH…RKSA) and 260–277 (DLGK…DTRR). Disordered regions lie at residues 1-32 (MDKH…TRSG) and 260-284 (DLGK…PNLF).

It belongs to the polyphosphate kinase 2 (PPK2) family. Class I subfamily.

It carries out the reaction [phosphate](n) + ATP = [phosphate](n+1) + ADP. It catalyses the reaction [phosphate](n) + GTP = [phosphate](n+1) + GDP. Uses inorganic polyphosphate (polyP) as a donor to convert ADP to ATP. Can also convert GDP to GTP, with lower efficiency. This Rhizobium meliloti (strain 1021) (Ensifer meliloti) protein is ADP-polyphosphate phosphotransferase 3.